We begin with the raw amino-acid sequence, 327 residues long: Phenylalanine--tRNA ligase alpha subunit (327 aa).

Glu252 contributes to the Mg(2+) binding site.

It belongs to the class-II aminoacyl-tRNA synthetase family. Phe-tRNA synthetase alpha subunit type 1 subfamily. As to quaternary structure, tetramer of two alpha and two beta subunits. Mg(2+) is required as a cofactor.

It is found in the cytoplasm. The enzyme catalyses tRNA(Phe) + L-phenylalanine + ATP = L-phenylalanyl-tRNA(Phe) + AMP + diphosphate + H(+). The chain is Phenylalanine--tRNA ligase alpha subunit from Haemophilus ducreyi (strain 35000HP / ATCC 700724).